A 320-amino-acid polypeptide reads, in one-letter code: Pyrroline-5-carboxylate reductase 2 (320 aa).

At Ser-2 the chain carries N-acetylserine. Residues Ile-6–Leu-11 and Ser-34 contribute to the NADP(+) site. The NADPH site is built by Ala-8, Gln-10, Leu-11, Ser-34, Glu-36, Asn-56, Val-70, Lys-71, and Ala-97. NADP(+) is bound by residues Asn-56, Ala-69 to Pro-72, and Cys-95 to Ala-97. An L-proline-binding site is contributed by Glu-164. Position 230 (Asn-230) interacts with NADPH. 2 residues coordinate L-proline: Ala-237 and Thr-238. A compositionally biased stretch (low complexity) spans Pro-295–Pro-305. Residues Pro-295–Asp-320 form a disordered region. At Ser-304 the chain carries Phosphoserine.

It belongs to the pyrroline-5-carboxylate reductase family. As to quaternary structure, homodecamer; composed of 5 homodimers. Interacts with LTO1.

It localises to the cytoplasm. The protein resides in the mitochondrion. It carries out the reaction L-proline + NADP(+) = (S)-1-pyrroline-5-carboxylate + NADPH + 2 H(+). The enzyme catalyses L-proline + NAD(+) = (S)-1-pyrroline-5-carboxylate + NADH + 2 H(+). It participates in amino-acid biosynthesis; L-proline biosynthesis; L-proline from L-glutamate 5-semialdehyde: step 1/1. Its function is as follows. Oxidoreductase that catalyzes the last step in proline biosynthesis, which corresponds to the reduction of pyrroline-5-carboxylate to L-proline using NAD(P)H. At physiologic concentrations, has higher specific activity in the presence of NADH. Involved in cellular response to oxidative stress. In some cell types, such as erythrocytes, its primary function may be the generation of NADP(+). This is Pyrroline-5-carboxylate reductase 2 (PYCR2) from Macaca fascicularis (Crab-eating macaque).